We begin with the raw amino-acid sequence, 315 residues long: Putative purine nucleoside phosphorylase (315 aa).

Residues Ser-49, His-81, 103-105, and Ala-135 contribute to the phosphate site; that span reads RYH. Residue Glu-220 coordinates a purine D-ribonucleoside. Ser-239 provides a ligand contact to phosphate. Asn-262 serves as a coordination point for a purine D-ribonucleoside.

It belongs to the PNP/MTAP phosphorylase family.

It localises to the cytoplasm. The protein resides in the nucleus. The enzyme catalyses a purine D-ribonucleoside + phosphate = a purine nucleobase + alpha-D-ribose 1-phosphate. The protein operates within purine metabolism; purine nucleoside salvage. In terms of biological role, the purine nucleoside phosphorylases catalyze the phosphorolytic breakdown of the N-glycosidic bond in the beta-(deoxy)ribonucleoside molecules, with the formation of the corresponding free purine bases and pentose-1-phosphate. Cleaves guanosine and inosine. This Schizosaccharomyces pombe (strain 972 / ATCC 24843) (Fission yeast) protein is Putative purine nucleoside phosphorylase.